Consider the following 328-residue polypeptide: Arylacetonitrilase (328 aa).

Positions 5–278 (VRVAVTQAEP…EGIIYADLDL (274 aa)) constitute a CN hydrolase domain. Catalysis depends on Glu45, which acts as the Proton acceptor. Lys125 is a catalytic residue. Cys160 acts as the Nucleophile in catalysis.

This sequence belongs to the carbon-nitrogen hydrolase superfamily. Nitrilase family.

It catalyses the reaction a nitrile + 2 H2O = a carboxylate + NH4(+). The enzyme catalyses 4-chlorophenylacetonitrile + 2 H2O = 4-chlorophenylacetate + NH4(+). In terms of biological role, nitrilase that hydrolyzes preferentially phenylacetonitrile and (R,S)-mandelonitrile. Also acts on dinitriles like phenylenediacetonitriles (PDAs) 1,2-PDA, 1,3-PDA, and 1,4-PDA, and cyanophenyl acetonitriles (CPAs) 2-CPA and 4-CPA. This is Arylacetonitrilase (nit2) from Aspergillus kawachii (strain NBRC 4308) (White koji mold).